The primary structure comprises 253 residues: Triosephosphate isomerase, cytosolic (253 aa).

Residues N10 and K12 each coordinate substrate. H96 acts as the Electrophile in catalysis. The active-site Proton acceptor is E166.

It belongs to the triosephosphate isomerase family. Homodimer.

The protein resides in the cytoplasm. It catalyses the reaction D-glyceraldehyde 3-phosphate = dihydroxyacetone phosphate. It participates in carbohydrate biosynthesis; gluconeogenesis. Its pathway is carbohydrate degradation; glycolysis; D-glyceraldehyde 3-phosphate from glycerone phosphate: step 1/1. This Oryza sativa subsp. japonica (Rice) protein is Triosephosphate isomerase, cytosolic (TPI).